The sequence spans 357 residues: Probable glutamine amidotransferase DUG3 (357 aa).

Cys-2 acts as the For GATase activity in catalysis. In terms of domain architecture, Glutamine amidotransferase type-2 spans Cys-2–Asp-260.

The protein belongs to the DUG3 family. In terms of assembly, component of the GSH degradosomal complex composed of at least DUG1, DUG2 and DUG3.

It is found in the cytoplasm. Component of the GSH degradosomal complex involved in the degradation of glutathione (GSH) and other peptides containing a gamma-glu-X bond. This is Probable glutamine amidotransferase DUG3 (DUG3) from Saccharomyces cerevisiae (strain ATCC 204508 / S288c) (Baker's yeast).